A 106-amino-acid polypeptide reads, in one-letter code: Small ribosomal subunit protein uS10 (106 aa).

The protein belongs to the universal ribosomal protein uS10 family. As to quaternary structure, part of the 30S ribosomal subunit.

In terms of biological role, involved in the binding of tRNA to the ribosomes. In Prochlorococcus marinus (strain MIT 9312), this protein is Small ribosomal subunit protein uS10.